An 891-amino-acid polypeptide reads, in one-letter code: Protein SEY1 homolog (891 aa).

Residues 1–754 (MNLHLVDSDG…LRAAEAGNQR (754 aa)) lie on the Cytoplasmic side of the membrane. Residues 52–318 (GLNYHVVGVF…RCSDYLFSYH (267 aa)) enclose the GB1/RHD3-type G domain. 62–69 (GGQSSGKS) is a GTP binding site. The chain crosses the membrane as a helical span at residues 755 to 775 (LPAWVIPALFILGWNELLYVL). Residues 776-778 (TSP) are Lumenal-facing. The helical transmembrane segment at 779–799 (ALLVLVVVICAVFFRQFFVSQ) threads the bilayer. Residues 800 to 891 (WHAFEETGPA…MRHRTTHKLD (92 aa)) lie on the Cytoplasmic side of the membrane. The span at 863–880 (STHADPAPSNTTVPTAQA) shows a compositional bias: polar residues. The disordered stretch occupies residues 863 to 891 (STHADPAPSNTTVPTAQATMRHRTTHKLD). Over residues 882–891 (MRHRTTHKLD) the composition is skewed to basic residues.

This sequence belongs to the TRAFAC class dynamin-like GTPase superfamily. GB1/RHD3 GTPase family. RHD3 subfamily.

It is found in the endoplasmic reticulum membrane. Functionally, probable GTP-binding protein that may be involved in cell development. This chain is Protein SEY1 homolog, found in Leishmania braziliensis.